The chain runs to 158 residues: Kalata-B3/B6 (158 aa).

Positions methionine 1–glycine 22 are cleaved as a signal peptide. Residues alanine 23–lysine 66 constitute a propeptide that is removed on maturation. The cyclopeptide (Gly-Asn) cross-link spans glycine 67–asparagine 96. 3 disulfide bridges follow: cysteine 71/cysteine 85, cysteine 75/cysteine 87, and cysteine 80/cysteine 93. Residues glycine 97 to lysine 121 constitute a propeptide that is removed on maturation. The cyclopeptide (Gly-Asp) cross-link spans glycine 122–aspartate 151. 3 cysteine pairs are disulfide-bonded: cysteine 126/cysteine 140, cysteine 130/cysteine 142, and cysteine 135/cysteine 148. Positions glycine 152–alanine 158 are excised as a propeptide.

The protein belongs to the cyclotide family. Moebius subfamily. In terms of processing, kalata-B3 and kalata-B6 are cyclic peptides.

In terms of biological role, probably participates in a plant defense mechanism. Has hemolytic activity. The protein is Kalata-B3/B6 (OAK2) of Oldenlandia affinis.